An 822-amino-acid chain; its full sequence is MKNKYDFKLVEEKRNEKWQKKGFFIAPKQTKKPFSIISPPPNVTGQLHLGHSWNAFIQDSLVRYHKLQGFDVLLLPSVDHAGIATQVKVEEDLAKKGIKKSDLKREEFIKKCYHWKEKQYLKIKEQWDKLGICYDFSKERFTLDQDAQIAVSDFFIKLWEKNLIYRGQKAINWDIKLQTAISNIEVINKPVEQKMYYLKYFLENSNEFLTVATTRIETISSDVALAINPKDKRYLHLVGKKVVHPLTKKLIKIIADSNVGSDFGSGIMKVSAHSILDFEIMEKHNLESKDCIDNYGNLNHEVPEFQGQNRFFARDLIAKKLEKEGFLAKIETVISNVGFSQRSDEIVEILKKPQWFVKMDELAKSLISHLNSKDKIKFYPKNFEKNLRKWFEKIHDWTISRQLWWGHRIPVWYKNDEFKVQIDSPGQGWIQDEDVLDTWFSSGISVFAFLGWPQNFDLIKSYFPTSLLVTGWDILFFWVARMYFSSLFIMKQKPFEKVLLHGLIRDEIGRKMSKSLGNGLDPMEIIEKYGSDTLRQALIFNSSPGKDIKFNIEKLNTAWNLNNKIWNIAKYIADLDTFFAKPDLIDLWMENKIYILKRQIVKNIKKYNFSVIGTEINNFIYGDFSSRYIELIKTRKNGFYARKLLRKVLIILHPFLPFLTDFLMEKIFKMEILEQKMPRIRQFKENQKVENILEIIDNLRTYREKFQISKKIILEYCIINDKFSNAEIDIINKLTFGKWLENKELVIKTKNFEIAIKVPEELKKEQKGRELKEIQFLKSEILRAEKILTNKGFLEKAPREKIDLERTKLEKLKEKLAFYEKK.

Residues 41–51 carry the 'HIGH' region motif; the sequence is PNVTGQLHLGH. A 'KMSKS' region motif is present at residues 511–515; it reads KMSKS. Lys-514 is a binding site for ATP. Positions 765 to 822 form a coiled coil; sequence EQKGRELKEIQFLKSEILRAEKILTNKGFLEKAPREKIDLERTKLEKLKEKLAFYEKK.

Belongs to the class-I aminoacyl-tRNA synthetase family. ValS type 1 subfamily. As to quaternary structure, monomer.

It localises to the cytoplasm. It catalyses the reaction tRNA(Val) + L-valine + ATP = L-valyl-tRNA(Val) + AMP + diphosphate. Catalyzes the attachment of valine to tRNA(Val). As ValRS can inadvertently accommodate and process structurally similar amino acids such as threonine, to avoid such errors, it has a 'posttransfer' editing activity that hydrolyzes mischarged Thr-tRNA(Val) in a tRNA-dependent manner. This Mesomycoplasma hyopneumoniae (strain 232) (Mycoplasma hyopneumoniae) protein is Valine--tRNA ligase.